We begin with the raw amino-acid sequence, 217 residues long: Peptide methionine sulfoxide reductase MsrA 1 (217 aa).

Cys-57 is a catalytic residue.

This sequence belongs to the MsrA Met sulfoxide reductase family.

The catalysed reaction is L-methionyl-[protein] + [thioredoxin]-disulfide + H2O = L-methionyl-(S)-S-oxide-[protein] + [thioredoxin]-dithiol. It carries out the reaction [thioredoxin]-disulfide + L-methionine + H2O = L-methionine (S)-S-oxide + [thioredoxin]-dithiol. Its function is as follows. Has an important function as a repair enzyme for proteins that have been inactivated by oxidation. Catalyzes the reversible oxidation-reduction of methionine sulfoxide in proteins to methionine. The chain is Peptide methionine sulfoxide reductase MsrA 1 (msrA1) from Rhizobium meliloti (strain 1021) (Ensifer meliloti).